A 123-amino-acid polypeptide reads, in one-letter code: Small ribosomal subunit protein uS12 (123 aa).

Asp89 is subject to 3-methylthioaspartic acid.

This sequence belongs to the universal ribosomal protein uS12 family. In terms of assembly, part of the 30S ribosomal subunit. Contacts proteins S8 and S17. May interact with IF1 in the 30S initiation complex.

Functionally, with S4 and S5 plays an important role in translational accuracy. Its function is as follows. Interacts with and stabilizes bases of the 16S rRNA that are involved in tRNA selection in the A site and with the mRNA backbone. Located at the interface of the 30S and 50S subunits, it traverses the body of the 30S subunit contacting proteins on the other side and probably holding the rRNA structure together. The combined cluster of proteins S8, S12 and S17 appears to hold together the shoulder and platform of the 30S subunit. This Beijerinckia indica subsp. indica (strain ATCC 9039 / DSM 1715 / NCIMB 8712) protein is Small ribosomal subunit protein uS12.